The following is a 162-amino-acid chain: Sec-independent protein translocase protein TatB (162 aa).

A helical transmembrane segment spans residues 1 to 21 (MFDIGFLEIIVIMVIALIVIG). The segment at 86 to 162 (IQDEFGIDQE…ESTPESSNKS (77 aa)) is disordered. Polar residues predominate over residues 108-117 (FSGTQFNKAP). The segment covering 123 to 135 (PTTEESPSSTPET) has biased composition (low complexity). The span at 147-162 (DVSAPSESTPESSNKS) shows a compositional bias: polar residues.

Belongs to the TatB family. As to quaternary structure, the Tat system comprises two distinct complexes: a TatABC complex, containing multiple copies of TatA, TatB and TatC subunits, and a separate TatA complex, containing only TatA subunits. Substrates initially bind to the TatABC complex, which probably triggers association of the separate TatA complex to form the active translocon.

The protein resides in the cell inner membrane. Its function is as follows. Part of the twin-arginine translocation (Tat) system that transports large folded proteins containing a characteristic twin-arginine motif in their signal peptide across membranes. Together with TatC, TatB is part of a receptor directly interacting with Tat signal peptides. TatB may form an oligomeric binding site that transiently accommodates folded Tat precursor proteins before their translocation. The chain is Sec-independent protein translocase protein TatB from Hydrogenovibrio crunogenus (strain DSM 25203 / XCL-2) (Thiomicrospira crunogena).